An 88-amino-acid chain; its full sequence is Phosphocarrier protein HPr (88 aa).

The HPr domain maps to 1 to 88 (MASKEFHIVA…ETMTKEGLAE (88 aa)). Histidine 15 (pros-phosphohistidine intermediate) is an active-site residue. A Phosphoserine; by HPrK/P modification is found at serine 46.

The protein belongs to the HPr family.

The protein resides in the cytoplasm. Phosphorylation on Ser-46 inhibits the phosphoryl transfer from enzyme I to HPr. General (non sugar-specific) component of the phosphoenolpyruvate-dependent sugar phosphotransferase system (sugar PTS). This major carbohydrate active-transport system catalyzes the phosphorylation of incoming sugar substrates concomitantly with their translocation across the cell membrane. The phosphoryl group from phosphoenolpyruvate (PEP) is transferred to the phosphoryl carrier protein HPr by enzyme I. Phospho-HPr then transfers it to the PTS EIIA domain. In terms of biological role, P-Ser-HPr interacts with the catabolite control protein A (CcpA), forming a complex that binds to DNA at the catabolite response elements cre, operator sites preceding a large number of catabolite-regulated genes. Thus, P-Ser-HPr is a corepressor in carbon catabolite repression (CCR), a mechanism that allows bacteria to coordinate and optimize the utilization of available carbon sources. P-Ser-HPr also plays a role in inducer exclusion, in which it probably interacts with several non-PTS permeases and inhibits their transport activity. The protein is Phosphocarrier protein HPr (ptsH) of Lactococcus lactis subsp. cremoris (Streptococcus cremoris).